The following is a 179-amino-acid chain: Hypoxanthine-guanine phosphoribosyltransferase (179 aa).

The diphosphate site is built by K42 and G43. Residues E98 and D99 each coordinate Mg(2+). The Proton acceptor role is filled by E102. GMP contacts are provided by residues K130, 151–152 (FV), and D158. Position 164 (R164) interacts with diphosphate.

It belongs to the purine/pyrimidine phosphoribosyltransferase family. Requires Mg(2+) as cofactor.

The protein localises to the cytoplasm. It catalyses the reaction IMP + diphosphate = hypoxanthine + 5-phospho-alpha-D-ribose 1-diphosphate. It carries out the reaction GMP + diphosphate = guanine + 5-phospho-alpha-D-ribose 1-diphosphate. The protein operates within purine metabolism; IMP biosynthesis via salvage pathway; IMP from hypoxanthine: step 1/1. It functions in the pathway purine metabolism; GMP biosynthesis via salvage pathway; GMP from guanine: step 1/1. Functionally, purine salvage pathway enzyme that catalyzes the transfer of the ribosyl-5-phosphate group from 5-phospho-alpha-D-ribose 1-diphosphate (PRPP) to the N9 position of the 6-oxopurines hypoxanthine and guanine to form the corresponding ribonucleotides IMP (inosine 5'-monophosphate) and GMP (guanosine 5'-monophosphate), with the release of PPi. The polypeptide is Hypoxanthine-guanine phosphoribosyltransferase (hpt) (Staphylococcus aureus (strain COL)).